Reading from the N-terminus, the 240-residue chain is Thymidylate kinase (240 aa).

10-17 is a binding site for ATP; it reads GINGVGKS.

The protein belongs to the thymidylate kinase family.

The enzyme catalyses dTMP + ATP = dTDP + ADP. Its pathway is pyrimidine metabolism; dTTP biosynthesis. In terms of biological role, catalyzes the conversion of dTMP to dTDP. This African swine fever virus (strain Badajoz 1971 Vero-adapted) (Ba71V) protein is Thymidylate kinase (TMK).